The sequence spans 446 residues: Sensor protein PfeS (446 aa).

The Cytoplasmic segment spans residues 1-9 (MRRHPLLWK). The chain crosses the membrane as a helical span at residues 10–30 (LALLQVGFCLLLTWLIYTWGL). The Periplasmic segment spans residues 31–155 (SVERSTYFLA…LLPGGLTPWT (125 aa)). A helical transmembrane segment spans residues 156–176 (HLVTHGIVPTLLAALLGLLLY). In terms of domain architecture, HAMP spans 177–233 (RHLVVPLNRLRDRADALRADELESTPLAAPLAARRDELGELAQALEHMAERLRLSLA). At 177–446 (RHLVVPLNRL…CLHLWLPAAA (270 aa)) the chain is on the cytoplasmic side. Residues 241–446 (TLSHELRTPL…CLHLWLPAAA (206 aa)) form the Histidine kinase domain. Histidine 244 bears the Phosphohistidine; by autocatalysis mark.

It localises to the cell inner membrane. It carries out the reaction ATP + protein L-histidine = ADP + protein N-phospho-L-histidine.. Functionally, member of the two-component regulatory system PfeR/PfeS. May activate PfeR by phosphorylation. The polypeptide is Sensor protein PfeS (pfeS) (Pseudomonas aeruginosa (strain ATCC 15692 / DSM 22644 / CIP 104116 / JCM 14847 / LMG 12228 / 1C / PRS 101 / PAO1)).